The following is a 100-amino-acid chain: Urease subunit gamma (100 aa).

Belongs to the urease gamma subunit family. Heterotrimer of UreA (gamma), UreB (beta) and UreC (alpha) subunits. Three heterotrimers associate to form the active enzyme.

It is found in the cytoplasm. The enzyme catalyses urea + 2 H2O + H(+) = hydrogencarbonate + 2 NH4(+). It functions in the pathway nitrogen metabolism; urea degradation; CO(2) and NH(3) from urea (urease route): step 1/1. In Cupriavidus metallidurans (strain ATCC 43123 / DSM 2839 / NBRC 102507 / CH34) (Ralstonia metallidurans), this protein is Urease subunit gamma.